The following is a 521-amino-acid chain: (+)-kolavenyl diphosphate synthase (521 aa).

Residues Asp-311 and Asp-313 each contribute to the Mg(2+) site. The DXDD motif signature appears at 311–314 (DGDD).

The protein belongs to the terpene synthase family. It depends on Mg(2+) as a cofactor.

It catalyses the reaction (2E,6E,10E)-geranylgeranyl diphosphate = (+)-kolavenyl diphosphate. Involved in the biosynthesis of (+)-O-methylkolavelool. Catalyzes the conversion of geranylgeranyl diphosphate into (+)-kolavenyl diphosphate. The protein is (+)-kolavenyl diphosphate synthase of Herpetosiphon aurantiacus (strain ATCC 23779 / DSM 785 / 114-95).